A 370-amino-acid polypeptide reads, in one-letter code: Homoserine kinase (370 aa).

The transit peptide at 1-34 (MASLCFQSPSKPISYFQPKSNPSPPLFAKVSVFR) directs the protein to the chloroplast. 143-154 (LPLGSGLGSSAA) is an ATP binding site.

This sequence belongs to the GHMP kinase family. Homoserine kinase subfamily.

Its subcellular location is the plastid. The protein resides in the chloroplast stroma. The enzyme catalyses L-homoserine + ATP = O-phospho-L-homoserine + ADP + H(+). Its pathway is amino-acid biosynthesis; L-threonine biosynthesis; L-threonine from L-aspartate: step 4/5. Catalyzes the ATP-dependent phosphorylation of L-homoserine to L-homoserine phosphate. Is specific for L-homoserine and cannot use other substrates such D-serine, L-serine, D-threonine and L-threonine, galactose or D-homoserine in vitro. Required for susceptibility to the downy mildew pathogen Hyaloperonospora parasitica. This Arabidopsis thaliana (Mouse-ear cress) protein is Homoserine kinase (HSK).